The following is a 260-amino-acid chain: Acetylglutamate kinase (260 aa).

Residues 46–47, arginine 68, and asparagine 160 each bind substrate; that span reads GG.

Belongs to the acetylglutamate kinase family. ArgB subfamily.

The protein resides in the cytoplasm. The catalysed reaction is N-acetyl-L-glutamate + ATP = N-acetyl-L-glutamyl 5-phosphate + ADP. The protein operates within amino-acid biosynthesis; L-arginine biosynthesis; N(2)-acetyl-L-ornithine from L-glutamate: step 2/4. Functionally, catalyzes the ATP-dependent phosphorylation of N-acetyl-L-glutamate. This Shewanella baltica (strain OS223) protein is Acetylglutamate kinase.